Here is a 253-residue protein sequence, read N- to C-terminus: 5'-nucleotidase SurE (253 aa).

D8, D9, S39, and N95 together coordinate a divalent metal cation.

Belongs to the SurE nucleotidase family. It depends on a divalent metal cation as a cofactor.

The protein localises to the cytoplasm. The catalysed reaction is a ribonucleoside 5'-phosphate + H2O = a ribonucleoside + phosphate. Its function is as follows. Nucleotidase that shows phosphatase activity on nucleoside 5'-monophosphates. This is 5'-nucleotidase SurE from Desulfatibacillum aliphaticivorans.